A 251-amino-acid polypeptide reads, in one-letter code: Lactose phosphotransferase system repressor (251 aa).

Residues 3–58 enclose the HTH deoR-type domain; the sequence is KYDRLDEITKLVNKRGSVRTNEIVEDLNVSDMTVRRDLAELEEKGVLTKIHGGARS. The segment at residues 20–39 is a DNA-binding region (H-T-H motif); that stretch reads VRTNEIVEDLNVSDMTVRRD.

Repressor of the lactose catabolism operon. Galactose-6-phosphate is the inducer. The protein is Lactose phosphotransferase system repressor (lacR) of Staphylococcus epidermidis (strain ATCC 35984 / DSM 28319 / BCRC 17069 / CCUG 31568 / BM 3577 / RP62A).